The sequence spans 658 residues: Aspartate--tRNA ligase, mitochondrial (658 aa).

Glu-198 contacts L-aspartate. The segment at 226–229 (QQYK) is aspartate. Arg-248 provides a ligand contact to L-aspartate. ATP-binding positions include 248 to 250 (RDE) and Glu-553. Arg-560 is a binding site for L-aspartate. 604–607 (GFDR) provides a ligand contact to ATP.

Belongs to the class-II aminoacyl-tRNA synthetase family. Type 1 subfamily.

It localises to the mitochondrion matrix. The enzyme catalyses tRNA(Asp) + L-aspartate + ATP = L-aspartyl-tRNA(Asp) + AMP + diphosphate. In terms of biological role, catalyzes the attachment of aspartate to tRNA(Asp) in the mitochondrion. This is Aspartate--tRNA ligase, mitochondrial (MSD1) from Saccharomyces cerevisiae (strain ATCC 204508 / S288c) (Baker's yeast).